The chain runs to 462 residues: MSKLWGGRFTEEAEAWVEEFGASISFDQQLVNQDINGSMAHVTMLAKQGIVTQEEAEKIKIGLQYLLKEAKENKLQFSVEAEDIHLNIEKMLIEQIGEVGGKLHTGRSRNDQVATDMHLYLKEKVEHIIKATKQLQTVLVQQAENNIETIMPGYTHLQRAQPISFAHHILAYFWMLERDVNRYEDSLKRINISPLGAGALAGTTFPIDREYSAELLGFNGIYENSLDAVSDRDFILEFLSNSSMLMMHLSRFCEELILWSSQEFQFIEMSDQYATGSSIMPQKKNPDMAELIRGKTGRVYGNLFSLLTVMKGLPLAYNKDLQEDKEGMFDTVKTVEGCLHIMTGMLETMTVNKEKMGQAVTQDFSNATEIADYLANKGLPFRQAHEIVGKLVLYCTQKGIYLLDVSLETYKEMSSLFEEDLYEVLSPYAAVKRRNSAGGTGFEQIKNALEKAKGLTKEVIKN.

Belongs to the lyase 1 family. Argininosuccinate lyase subfamily.

It is found in the cytoplasm. The catalysed reaction is 2-(N(omega)-L-arginino)succinate = fumarate + L-arginine. It participates in amino-acid biosynthesis; L-arginine biosynthesis; L-arginine from L-ornithine and carbamoyl phosphate: step 3/3. This chain is Argininosuccinate lyase, found in Bacillus cereus (strain ATCC 14579 / DSM 31 / CCUG 7414 / JCM 2152 / NBRC 15305 / NCIMB 9373 / NCTC 2599 / NRRL B-3711).